The following is a 609-amino-acid chain: Rhotekin-2 (609 aa).

The REM-1 domain occupies 5 to 81; the sequence is SLRGPALRLA…LQKLEEQIAN (77 aa). A coiled-coil region spans residues 56 to 91; sequence KNLMVCNARLMAYTSELQKLEEQIANQTGRCDVKFE. The PH domain maps to 286 to 393; that stretch reads EDAFAGFLNQ…WMEAFWQHFF (108 aa). Disordered stretches follow at residues 495-520 and 554-609; these read HDEK…KSQS and KPMA…QAQV. Basic and acidic residues predominate over residues 569–582; the sequence is RLSDGEHTDTKTNF.

Expressed in lymphocytes, CD4 positive T-cells and bone marrow-derived cells. Also expressed in lung, colon, thymus and brain.

Its function is as follows. May play an important role in lymphopoiesis. The protein is Rhotekin-2 (RTKN2) of Homo sapiens (Human).